The following is a 123-amino-acid chain: UPF0102 protein CLJ_B2665 (123 aa).

It belongs to the UPF0102 family.

This is UPF0102 protein CLJ_B2665 from Clostridium botulinum (strain 657 / Type Ba4).